Here is a 229-residue protein sequence, read N- to C-terminus: Flagellar L-ring protein (229 aa).

Positions 1–25 (MKQVRLLPSAPVRAVCALAVAALAG) are cleaved as a signal peptide. A lipid anchor (N-palmitoyl cysteine) is attached at C26. C26 is lipidated: S-diacylglycerol cysteine.

Belongs to the FlgH family. As to quaternary structure, the basal body constitutes a major portion of the flagellar organelle and consists of four rings (L,P,S, and M) mounted on a central rod.

Its subcellular location is the cell outer membrane. The protein localises to the bacterial flagellum basal body. Its function is as follows. Assembles around the rod to form the L-ring and probably protects the motor/basal body from shearing forces during rotation. The chain is Flagellar L-ring protein from Burkholderia ambifaria (strain MC40-6).